We begin with the raw amino-acid sequence, 747 residues long: uncharacterized protein (747 aa).

A helical membrane pass occupies residues 7-27; the sequence is FFLKVISVIAPIVIIPTILAN.

Its subcellular location is the membrane. This is an uncharacterized protein from Ureaplasma parvum serovar 3 (strain ATCC 700970).